The sequence spans 335 residues: MAAQNNQEVDALVEKITGLHAAIAKLPSLSPSPDVDALFTELVTACVPPSPVDVTKLGPEAQEMREGLIRLCSEAEGKLEAHYSDMLAAFDKPLDHLGMFPYYNNYINLSKLEYELLARYVPGGYRPARVAFIGSGPLPFSSFVLAARHLPDTMFDNYDLCGAANDRASKLFRADRDVGARMSFHTADVADLAGELAKYDVVFLAALVGMAAEDKAKVIAHLGAHMADGAALVVRSAHGARGFLYPIVDPQDIGRGGFEVLAVCHPDDDVVNSVIIAQKSKDVHADGLGSGRGAGGQYARGTVPVVSPPCRFGEMVADVTQNHKRDEFANAEVAF.

Belongs to the nicotianamine synthase (NAS)-like family.

It catalyses the reaction 3 S-adenosyl-L-methionine = nicotianamine + 3 S-methyl-5'-thioadenosine + 3 H(+). Its function is as follows. Synthesizes nicotianamine, a polyamine that is the first intermediate in the synthesis of the phytosiderophores of the mugineic acid type found in gramineae which serves as a sensor for the physiological iron status within the plant, and/or might be involved in the transport of iron. The protein is Probable nicotianamine synthase 2 (NAS2) of Hordeum vulgare (Barley).